The primary structure comprises 474 residues: Alpha-galactosidase (474 aa).

An N-terminal signal peptide occupies residues 1 to 22 (MINFSLLTSIVLLASKVVGVSP). 2 cysteine pairs are disulfide-bonded: cysteine 43–cysteine 75 and cysteine 122–cysteine 152. N-linked (GlcNAc...) asparagine glycosylation occurs at asparagine 44. Residues aspartate 73, aspartate 74, and lysine 148 each contribute to the substrate site. Aspartate 150 acts as the Nucleophile in catalysis. N-linked (GlcNAc...) asparagine glycosylation occurs at asparagine 176. A substrate-binding site is contributed by arginine 206. Catalysis depends on aspartate 210, which acts as the Proton donor. 2 cysteine pairs are disulfide-bonded: cysteine 222–cysteine 238 and cysteine 224–cysteine 231. Residue glutamine 252 coordinates substrate. N-linked (GlcNAc...) asparagine glycans are attached at residues asparagine 271, asparagine 414, asparagine 423, asparagine 436, and asparagine 455.

Belongs to the glycosyl hydrolase 27 family. In terms of assembly, homotetramer.

It localises to the secreted. The catalysed reaction is Hydrolysis of terminal, non-reducing alpha-D-galactose residues in alpha-D-galactosides, including galactose oligosaccharides, galactomannans and galactolipids.. The chain is Alpha-galactosidase (MEL) from Torulaspora delbrueckii (Yeast).